A 314-amino-acid polypeptide reads, in one-letter code: Cytochrome f (314 aa).

The signal sequence occupies residues 1–30; that stretch reads MATNKFFKSLLFTLTIAISSFGFCVENSSA. The heme site is built by Y31, C51, C54, and H55. Residues 280–300 form a helical membrane-spanning segment; sequence ILGYLAFCFCLLLTQVLLVLK.

It belongs to the cytochrome f family. The 4 large subunits of the cytochrome b6-f complex are cytochrome b6, subunit IV (17 kDa polypeptide, petD), cytochrome f and the Rieske protein, while the 4 small subunits are PetG, PetL, PetM and PetN. The complex functions as a dimer. The cofactor is heme.

Its subcellular location is the plastid. The protein localises to the chloroplast thylakoid membrane. Its function is as follows. Component of the cytochrome b6-f complex, which mediates electron transfer between photosystem II (PSII) and photosystem I (PSI), cyclic electron flow around PSI, and state transitions. The sequence is that of Cytochrome f from Thalassiosira pseudonana (Marine diatom).